Consider the following 1055-residue polypeptide: MRKKRRGFLNASTAVLVGILAGFLGVVLAATGALGFAVRESLLLKQFLFLSFEGNTDGASPFGKDVVVTASQDVAADGEYSLKVENRTSVWDGVEIDLTGKVNTGTDYLLSFHVYQTSDSPQLFSVLARTEDEKGERYKILADKVVVPNYWKEILVPFSPTFEGTPAKFSLIITSPKKTDFVFYVDNVQVLTPKEAGPKVVYETSFEKGIGDWQPRGSDVKISISPKVAHSGKKSLFVSNRQKGWHGAQISLKGILKTGKTYAFEAWVYQESGQDQTIIMTMQRKYSSDSSTKYEWIKAATVPSGQWVQLSGTYTIPAGVTVEDLTLYFESQNPTLEFYVDDVKVVDTTSAEIKLEMNPEEEIPALKDVLKDYFRVGVALPSKVFINQKDIALISKHSNSSTAENEMKPDSLLAGIENGKLKFRFETADKYIEFAQQNGMVVRGHTLVWHNQTPEWFFKDENGNLLSKEEMTERLREYIHTVVGHFKGKVYAWDVVNEAVDPNQPDGLRRSTWYQIMGPDYIELAFKFAREADPNAKLFYNDYNTFEPKKRDIIYNLVKSLKEKGLIDGIGMQCHISLATDIRQIEEAIKKFSTIPGIEIHITELDISVYRDSTSNYSEAPRTALIEQAHKMAQLFKIFKKYSNVITNVTFWGLKDDYSWRATRRNDWPLIFDKDYQAKLAYWAIVAPEVLPPLPKESKISEGEAVVVGMMDDSYMMSKPIEIYDEEGNVKATIRAIWKDSTIYVYGEVQDATKKPAEDGVAIFINPNNERTPYLQPDDTYVVLWTNWKSEVNREDVEVKKFVGPGFRRYSFEMSITIPGVEFKKDSYIGFDVAVIDDGKWYSWSDTTNSQKTNTMNYGTLKLEGVMVATAKYGTPVIDGEIDDIWNTTEEIETKSVAMGSLEKNATAKVRVLWDEENLYVLAIVKDPVLNKDNSNPWEQDSVEIFIDENNHKTGYYEDDDAQFRVNYMNEQSFGTGASAARFKTAVKLIEGGYIVEAAIKWKTIKPSPNTVIGFNVQVNDANEKGQRVGIISWSDPTNNSWRDPSKFGNLRLIK.

Positions 1 to 29 (MRKKRRGFLNASTAVLVGILAGFLGVVLA) are cleaved as a signal peptide. The tract at residues 30–357 (ATGALGFAVR…TTSAEIKLEM (328 aa)) is a. The GH10 domain maps to 360 to 688 (EEEIPALKDV…KLAYWAIVAP (329 aa)). The active-site Proton donor is the Glu498. The Nucleophile role is filled by Glu604. 2 consecutive CBM-cenC domains span residues 720 to 851 (PIEI…TNSQ) and 895 to 1040 (KSVA…PTNN).

Belongs to the glycosyl hydrolase 10 (cellulase F) family.

It catalyses the reaction Endohydrolysis of (1-&gt;4)-beta-D-xylosidic linkages in xylans.. The sequence is that of Endo-1,4-beta-xylanase A (xynA) from Thermotoga neapolitana.